Here is a 2605-residue protein sequence, read N- to C-terminus: Non-reducing polyketide synthase dbaI (2605 aa).

Residues 97 to 243 (PNTLLIPLVM…PASEISDLHR (147 aa)) are N-terminal acylcarrier protein transacylase domain (SAT). Residue C144 is the Nucleophile; for transacylase activity of the active site. H262 functions as the Proton donor/acceptor; for transacylase activity in the catalytic mechanism. The Ketosynthase family 3 (KS3) domain occupies 382–798 (ENDIAVVGMS…GSNASIVVTQ (417 aa)). Catalysis depends on for beta-ketoacyl synthase activity residues C547, H682, and H721. The tract at residues 908 to 1195 (FGGQVSTFVG…VTNMASRALG (288 aa)) is malonyl-CoA:ACP transacylase (MAT) domain. An N-terminal hotdog fold region spans residues 1285–1420 (PNTLLTFVGY…GRVIFRSISD (136 aa)). The region spanning 1285–1596 (PNTLLTFVGY…YVKIPKASMS (312 aa)) is the PKS/mFAS DH domain. Residues 1316–1594 (LIRGHIIAQT…ISYVKIPKAS (279 aa)) form a product template (PT) domain region. The active-site Proton acceptor; for dehydratase activity is H1320. The interval 1447–1596 (EVDEVLQNRN…YVKIPKASMS (150 aa)) is C-terminal hotdog fold. Catalysis depends on D1504, which acts as the Proton donor; for dehydratase activity. A Carrier domain is found at 1665–1739 (GQLTQRIKSI…SLIKCVRKAM (75 aa)). Position 1699 is an O-(pantetheine 4'-phosphoryl)serine (S1699). Positions 1742–1780 (DADSAEYTTEQSTSEAADSDDKSTNYTTPSTPGEEALDM) are disordered. The span at 1747–1757 (EYTTEQSTSEA) shows a compositional bias: polar residues. The tract at residues 1963–2151 (DWPLNRLFYR…VGYGHVDWTD (189 aa)) is methyltransferase domain. The NADPH-binding (R) domain stretch occupies residues 2230–2473 (VTGATGSLGC…LSWTPVDVVA (244 aa)).

It carries out the reaction 4 malonyl-CoA + acetyl-CoA + AH2 + S-adenosyl-L-methionine + 3 H(+) = 2,4-dihydroxy-3-methyl-6-(2-oxopropyl)benzaldehyde + A + S-adenosyl-L-homocysteine + 4 CO2 + 5 CoA + H2O. Its pathway is secondary metabolite biosynthesis. Its function is as follows. Non-reducing polyketide synthase; part of the gene cluster that mediates the biosynthesis of the antibiotic 2,4-dihydroxy-3-methyl-6-(2-oxopropyl)benzaldehyde (DHMBA) and its derivatives. The direct non-reducing polyketide synthase dbaI product is 2,4-dihydroxy-3-methyl-6-(2-oxopropyl)benzaldehyde (DHMBA), produced by condensation of one acetyl-CoA starter unit with 4 malonyl-CoA units and one methylation step. The FAD-dependent monooxygenase dbaH is responsible for the synthesis of yellow pigments derived from the oxidation of DHMBA. The roles of dbaB, C, E and F have still to be determined. The protein is Non-reducing polyketide synthase dbaI of Emericella nidulans (strain FGSC A4 / ATCC 38163 / CBS 112.46 / NRRL 194 / M139) (Aspergillus nidulans).